Consider the following 244-residue polypeptide: NAD(P)H-quinone oxidoreductase subunit K (244 aa).

[4Fe-4S] cluster-binding residues include Cys60, Cys61, Cys125, and Cys156. The span at 221-236 (SKKEKITELPENREQT) shows a compositional bias: basic and acidic residues. The disordered stretch occupies residues 221–244 (SKKEKITELPENREQTEIINSEEE).

It belongs to the complex I 20 kDa subunit family. As to quaternary structure, NDH-1 can be composed of about 15 different subunits; different subcomplexes with different compositions have been identified which probably have different functions. [4Fe-4S] cluster is required as a cofactor.

Its subcellular location is the cellular thylakoid membrane. The enzyme catalyses a plastoquinone + NADH + (n+1) H(+)(in) = a plastoquinol + NAD(+) + n H(+)(out). The catalysed reaction is a plastoquinone + NADPH + (n+1) H(+)(in) = a plastoquinol + NADP(+) + n H(+)(out). NDH-1 shuttles electrons from an unknown electron donor, via FMN and iron-sulfur (Fe-S) centers, to quinones in the respiratory and/or the photosynthetic chain. The immediate electron acceptor for the enzyme in this species is believed to be plastoquinone. Couples the redox reaction to proton translocation, and thus conserves the redox energy in a proton gradient. Cyanobacterial NDH-1 also plays a role in inorganic carbon-concentration. This Prochlorococcus marinus (strain MIT 9312) protein is NAD(P)H-quinone oxidoreductase subunit K.